An 892-amino-acid polypeptide reads, in one-letter code: Translation initiation factor IF-2 (892 aa).

Residues 65–296 (KTRSTLNIPS…KGKRKPSTLQ (232 aa)) are disordered. The segment covering 68 to 82 (STLNIPSTGGKSKSV) has biased composition (polar residues). The segment covering 99–217 (EQAKAEEQAQ…KMAAENEGKW (119 aa)) has biased composition (basic and acidic residues). Residues 224–237 (QTESADYHVTTSQH) are compositionally biased toward polar residues. Residues 239–254 (RAAEDENDAKVEGDRR) are compositionally biased toward basic and acidic residues. Over residues 255–269 (SRTRGGKATKQKKGN) the composition is skewed to basic residues. Positions 270–283 (KLSESKADREEARA) are enriched in basic and acidic residues. The tr-type G domain occupies 391–560 (HRAPVVTIMG…LLQAEVLELK (170 aa)). Positions 400 to 407 (GHVDHGKT) are G1. Residue 400–407 (GHVDHGKT) participates in GTP binding. The segment at 425 to 429 (GITQH) is G2. Residues 446-449 (DTPG) are G3. Residues 446–450 (DTPGH) and 500–503 (NKID) each bind GTP. Residues 500–503 (NKID) are G4. The segment at 536–538 (SAK) is G5.

It belongs to the TRAFAC class translation factor GTPase superfamily. Classic translation factor GTPase family. IF-2 subfamily.

It localises to the cytoplasm. Functionally, one of the essential components for the initiation of protein synthesis. Protects formylmethionyl-tRNA from spontaneous hydrolysis and promotes its binding to the 30S ribosomal subunits. Also involved in the hydrolysis of GTP during the formation of the 70S ribosomal complex. In Yersinia pseudotuberculosis serotype O:1b (strain IP 31758), this protein is Translation initiation factor IF-2.